Here is a 396-residue protein sequence, read N- to C-terminus: MSDTSAKHIDTLLQHLGSAPFNPDTGAAPVNLPSVRASTVRFQSLAKLEDAQRRKAAGERASTYGRMGMDTHAALEQVFAELEGGTHCYLASSGLAGISMVFLSLLSAGEHALVADCAYGPVHELHEAVLSRLGIDVTFFDAKADLASLVRPTTRLIFAEAPGSLLFEMLDMPALARFAKQHDLILATDNTWGSGYIYRPLTLGAQVSVIAGTKYVGGHSDLMLGAVVTNDEAIAKRLNRTQYALGYSVSADDAWLALRGVRTMPVRMAQHARHALEVCEFLQNRPEVVRLYHPAWPADPGHALWQRDCSGSNGMLAVQLGLSPQAARDFVNALTLFGIGFSWGGFESLVQLVTPGELARHQYWQGGSDALVRLHIGLESPADLIADLAQALDRAA.

At lysine 214 the chain carries N6-(pyridoxal phosphate)lysine.

This sequence belongs to the trans-sulfuration enzymes family. In terms of assembly, homodimer. Requires pyridoxal 5'-phosphate as cofactor.

The protein localises to the cytoplasm. It carries out the reaction L,L-cystathionine + H2O = L-homocysteine + pyruvate + NH4(+). The catalysed reaction is an S-substituted L-cysteine + H2O = a thiol + pyruvate + NH4(+). It functions in the pathway amino-acid biosynthesis; L-methionine biosynthesis via de novo pathway; L-homocysteine from L-cystathionine: step 1/1. Functionally, catalyzes the cleavage of cystathionine to homocysteine, pyruvate and ammonia during methionine biosynthesis. Also has cytotoxic activity toward osteogenic, osteosarcoma and tracheal cells, in vitro. The chemical basis for cell toxicity might be the formation and subsequent transfer of sulfane-sulfur to proteins, derived via beta-cystathionase cleavage of L-cystine. In Bordetella avium, this protein is Cystathionine beta-lyase (metC).